We begin with the raw amino-acid sequence, 367 residues long: Cyclin-dependent kinase 5 activator 2 (367 aa).

A compositionally biased stretch (polar residues) spans M1–S11. Disordered stretches follow at residues M1–R56, A72–Q98, A131–R175, and G329–R367. The N-myristoyl glycine moiety is linked to residue G2. Basic residues predominate over residues A74 to T84. At T84 the chain carries Phosphothreonine. Low complexity predominate over residues A131–P148. Residues K154–G171 are compositionally biased toward pro residues. A compositionally biased stretch (low complexity) spans G342 to G357.

Belongs to the cyclin-dependent kinase 5 activator family. As to quaternary structure, heterodimer of a catalytic subunit and a regulatory subunit. In terms of processing, myristoylated. The Gly-2-Ala mutant is absent of the cell periphery, suggesting that a proper myristoylation signal is essential for the proper distribution of CDK5R2 (p39). In terms of tissue distribution, brain and neuron specific.

It localises to the cell membrane. Its function is as follows. Activator of CDK5/TPKII. This is Cyclin-dependent kinase 5 activator 2 (CDK5R2) from Homo sapiens (Human).